The following is a 450-amino-acid chain: Benzene 1,2-dioxygenase subunit alpha (450 aa).

A Rieske domain is found at 54 to 163 (WLLLGHETQI…VETYKGLIFA (110 aa)). Residues C96, H98, C116, and H119 each contribute to the [2Fe-2S] cluster site. H222 and H228 together coordinate Fe cation.

It belongs to the bacterial ring-hydroxylating dioxygenase alpha subunit family. In terms of assembly, this dioxygenase system consists of four proteins: the two subunits of the hydroxylase component (BnzA and BnzB), a ferredoxin (BnzC) and a ferredoxin reductase (BnzD). [2Fe-2S] cluster serves as cofactor. It depends on Fe cation as a cofactor.

It carries out the reaction benzene + NADH + O2 + H(+) = cis-1,2-dihydrobenzene-1,2-diol + NAD(+). The catalysed reaction is toluene + NADH + O2 + H(+) = (1S,2R)-3-methylcyclohexa-3,5-diene-1,2-diol + NAD(+). Its pathway is aromatic compound metabolism; benzene degradation; catechol from benzene: step 1/2. It participates in xenobiotic degradation; toluene degradation. The protein operates within xenobiotic degradation; xylene degradation. In terms of biological role, catalyzes both the oxidation of benzene and toluene. The protein is Benzene 1,2-dioxygenase subunit alpha (bnzA) of Pseudomonas putida (strain ATCC 700007 / DSM 6899 / JCM 31910 / BCRC 17059 / LMG 24140 / F1).